The sequence spans 339 residues: Fe-S cluster assembly protein DRE2 (339 aa).

The segment at 1–157 is N-terminal SAM-like domain; that stretch reads MTRILLLLHP…KKLSSTHAAV (157 aa). The segment at 158–206 is linker; that stretch reads GLTDTSASNTDEENDDVNSKRKLQETKLAYFSESDDEDEEDQIIDENNL. Residues cysteine 221, cysteine 233, cysteine 236, and cysteine 238 each coordinate [2Fe-2S] cluster. Positions 221-238 are fe-S binding site A; that stretch reads CELPNGKKRRKACKDCTC. Positions 302, 305, 313, and 316 each coordinate [4Fe-4S] cluster. 2 consecutive short sequence motifs (cx2C motif) follow at residues 302-305 and 313-316; these read CSSC and CDGC. The fe-S binding site B stretch occupies residues 302–316; the sequence is CSSCSLGDAFRCDGC.

Belongs to the anamorsin family. As to quaternary structure, monomer. Interacts with TAH18. Interacts with MIA40. It depends on [2Fe-2S] cluster as a cofactor. [4Fe-4S] cluster serves as cofactor.

The protein localises to the cytoplasm. The protein resides in the mitochondrion intermembrane space. Its function is as follows. Component of the cytosolic iron-sulfur (Fe-S) protein assembly (CIA) machinery required for the maturation of extramitochondrial Fe-S proteins. Part of an electron transfer chain functioning in an early step of cytosolic Fe-S biogenesis, facilitating the de novo assembly of a [4Fe-4S] cluster on the scaffold complex CFD1-NBP35. Electrons are transferred to DRE2 from NADPH via the FAD- and FMN-containing protein TAH18. TAH18-DRE2 are also required for the assembly of the diferric tyrosyl radical cofactor of ribonucleotide reductase (RNR), probably by providing electrons for reduction during radical cofactor maturation in the catalytic small subunit RNR2. The chain is Fe-S cluster assembly protein DRE2 from Debaryomyces hansenii (strain ATCC 36239 / CBS 767 / BCRC 21394 / JCM 1990 / NBRC 0083 / IGC 2968) (Yeast).